The chain runs to 62 residues: Large ribosomal subunit protein uL30 (62 aa).

This sequence belongs to the universal ribosomal protein uL30 family. As to quaternary structure, part of the 50S ribosomal subunit.

In Ruegeria pomeroyi (strain ATCC 700808 / DSM 15171 / DSS-3) (Silicibacter pomeroyi), this protein is Large ribosomal subunit protein uL30.